The following is a 527-amino-acid chain: Eukaryotic translation initiation factor 4B1 (527 aa).

Disordered regions lie at residues 1-370 and 453-527; these read MAKP…REVV and FGQR…RQGW. 2 stretches are compositionally biased toward low complexity: residues 35-45 and 74-85; these read AAAGGAASFPS and GAAGAPRRVAPA. Basic and acidic residues-rich tracts occupy residues 102–155 and 181–194; these read PRER…DNWG and RSDD…DKKP. A Nuclear localization signal motif is present at residues 196–203; the sequence is PSRYPSLG. Positions 203-232 are enriched in gly residues; sequence GTGGGFRESSGGGFRESSGGGFRESSGGGF. A compositionally biased stretch (basic and acidic residues) spans 293–317; that stretch reads KPREEVLAEKGLDWRKMEGEIEKKT. Positions 319–336 are enriched in low complexity; sequence RPTSSHSSRPNSAHSSRP. Composition is skewed to basic and acidic residues over residues 472 to 485 and 496 to 510; these read EEPH…DRPR and PVEE…RERG. Residues 518–527 are compositionally biased toward low complexity; the sequence is SDRSSTRQGW.

It belongs to the eIF-4 subunit B family. Homodimer. Nonspherical monomer. mRNA-discriminating component of initiation complexes. Phosphorylated.

It localises to the nucleus. Promotes the eIF4F and eIF4A RNA-dependent ATP-hydrolysis activity with different efficiency depending on mRNAs, thus providing mRNA discrimination during initiation of translation. The chain is Eukaryotic translation initiation factor 4B1 from Triticum aestivum (Wheat).